The chain runs to 309 residues: Homoserine kinase (309 aa).

Position 91-101 (91-101) interacts with ATP; sequence PIGSGLGSSAC.

Belongs to the GHMP kinase family. Homoserine kinase subfamily.

It localises to the cytoplasm. It carries out the reaction L-homoserine + ATP = O-phospho-L-homoserine + ADP + H(+). It functions in the pathway amino-acid biosynthesis; L-threonine biosynthesis; L-threonine from L-aspartate: step 4/5. Functionally, catalyzes the ATP-dependent phosphorylation of L-homoserine to L-homoserine phosphate. In Edwardsiella ictaluri (strain 93-146), this protein is Homoserine kinase.